The primary structure comprises 346 residues: Phosphate acyltransferase (346 aa).

It belongs to the PlsX family. As to quaternary structure, homodimer. Probably interacts with PlsY.

The protein localises to the cytoplasm. It catalyses the reaction a fatty acyl-[ACP] + phosphate = an acyl phosphate + holo-[ACP]. The protein operates within lipid metabolism; phospholipid metabolism. Its function is as follows. Catalyzes the reversible formation of acyl-phosphate (acyl-PO(4)) from acyl-[acyl-carrier-protein] (acyl-ACP). This enzyme utilizes acyl-ACP as fatty acyl donor, but not acyl-CoA. The chain is Phosphate acyltransferase from Geobacter sulfurreducens (strain ATCC 51573 / DSM 12127 / PCA).